The chain runs to 95 residues: Aspartyl/glutamyl-tRNA(Asn/Gln) amidotransferase subunit C (95 aa).

The protein belongs to the GatC family. In terms of assembly, heterotrimer of A, B and C subunits.

The catalysed reaction is L-glutamyl-tRNA(Gln) + L-glutamine + ATP + H2O = L-glutaminyl-tRNA(Gln) + L-glutamate + ADP + phosphate + H(+). It catalyses the reaction L-aspartyl-tRNA(Asn) + L-glutamine + ATP + H2O = L-asparaginyl-tRNA(Asn) + L-glutamate + ADP + phosphate + 2 H(+). Functionally, allows the formation of correctly charged Asn-tRNA(Asn) or Gln-tRNA(Gln) through the transamidation of misacylated Asp-tRNA(Asn) or Glu-tRNA(Gln) in organisms which lack either or both of asparaginyl-tRNA or glutaminyl-tRNA synthetases. The reaction takes place in the presence of glutamine and ATP through an activated phospho-Asp-tRNA(Asn) or phospho-Glu-tRNA(Gln). The chain is Aspartyl/glutamyl-tRNA(Asn/Gln) amidotransferase subunit C from Brucella abortus (strain S19).